The primary structure comprises 360 residues: Histidinol-phosphate aminotransferase (360 aa).

Lys211 is modified (N6-(pyridoxal phosphate)lysine).

The protein belongs to the class-II pyridoxal-phosphate-dependent aminotransferase family. Histidinol-phosphate aminotransferase subfamily. As to quaternary structure, homodimer. Pyridoxal 5'-phosphate is required as a cofactor.

The catalysed reaction is L-histidinol phosphate + 2-oxoglutarate = 3-(imidazol-4-yl)-2-oxopropyl phosphate + L-glutamate. It functions in the pathway amino-acid biosynthesis; L-histidine biosynthesis; L-histidine from 5-phospho-alpha-D-ribose 1-diphosphate: step 7/9. In Sodalis glossinidius (strain morsitans), this protein is Histidinol-phosphate aminotransferase.